A 905-amino-acid chain; its full sequence is Tight junction protein ZO-3 (905 aa).

In terms of domain architecture, PDZ 1 spans 11–93 (TATLYKDPRR…TANVTVKRPR (83 aa)). The disordered stretch occupies residues 92–167 (PRRVQLPATK…GGGSEANGLD (76 aa)). Ser111 and Ser128 each carry phosphoserine. The segment covering 124-133 (GDSSSGSGRS) has biased composition (low complexity). Positions 139–155 (RRSRAGRRGRVGSHGRR) are enriched in basic residues. A phosphoserine mark is found at Ser156, Ser157, Ser161, Ser195, and Ser311. Residues 187-264 (SVLVKRRNSE…ELTLLVLRDS (78 aa)) enclose the PDZ 2 domain. Residues 289-367 (LTSELSQAPP…QSLEDRGYSP (79 aa)) form a disordered region. Thr317 is modified (phosphothreonine). Phosphoserine occurs at positions 319, 343, and 359. In terms of domain architecture, PDZ 3 spans 368–434 (DTRVVSFPKG…LTREEAVQFL (67 aa)). Residues 464 to 541 (GDSFYIRTHF…PNQSRAEQLA (78 aa)) enclose the SH3 domain. A Guanylate kinase-like domain is found at 573 to 754 (RRGTKKASTQ…WYQEVKAVIQ (182 aa)). Residue Ser584 is modified to Phosphoserine. Disordered stretches follow at residues 773–818 (EDLD…PQDV) and 850–905 (TDKW…ATDL). Over residues 851–877 (DKWETQADSHYTQDQRRQDSMRTYKHE) the composition is skewed to basic and acidic residues. Phosphoserine occurs at positions 891 and 892.

This sequence belongs to the MAGUK family. As to quaternary structure, interacts with occludin OCLN, claudins and TPJ1. Interacts with PATJ. Interacts with UBN1. Interacts with FASLG. Interacts with CCND1. Phosphorylated. In terms of tissue distribution, is concentrated in various types of epithelium, in tissues such as the lung, liver and kidney, but not in endothelium or at cadherin-based cell-cell adhesion sites.

It localises to the cell membrane. The protein resides in the cell junction. The protein localises to the tight junction. Its subcellular location is the nucleus. Tjp1, Tjp2, and Tjp3 are closely related scaffolding proteins that link tight junction (TJ) transmembrane proteins such as claudins, junctional adhesion molecules, and occludin to the actin cytoskeleton. The tight junction acts to limit movement of substances through the paracellular space and as a boundary between the compositionally distinct apical and basolateral plasma membrane domains of epithelial and endothelial cells. Binds and recruits PatJ to tight junctions where it connects and stabilizes apical and lateral components of tight junctions. Promotes cell-cycle progression through the sequestration of cyclin D1 (Ccnd1) at tight junctions during mitosis which prevents Ccnd1 degradation during M-phase and enables S-phase transition. With Tjp1 and Tjp2, participates in the junctional retention and stability of the transcription factor DbpA, but is not involved in its shuttling to the nucleus. Contrary to Tjp2, Tjp3 is dispensable for individual viability, embryonic development, epithelial differentiation, and the establishment of TJs, at least in the laboratory environment. The sequence is that of Tight junction protein ZO-3 (Tjp3) from Mus musculus (Mouse).